Reading from the N-terminus, the 207-residue chain is 3-demethoxyubiquinol 3-hydroxylase (207 aa).

Over residues 22 to 32 the composition is skewed to basic and acidic residues; sequence ERANPADRLAP. A disordered region spans residues 22–41; sequence ERANPADRLAPETEQMNPEE. Fe cation is bound by residues Glu56, Glu86, His89, Glu138, Glu170, and His173.

This sequence belongs to the COQ7 family. Fe cation serves as cofactor.

It localises to the cell membrane. It carries out the reaction a 5-methoxy-2-methyl-3-(all-trans-polyprenyl)benzene-1,4-diol + AH2 + O2 = a 3-demethylubiquinol + A + H2O. The protein operates within cofactor biosynthesis; ubiquinone biosynthesis. Functionally, catalyzes the hydroxylation of 2-nonaprenyl-3-methyl-6-methoxy-1,4-benzoquinol during ubiquinone biosynthesis. The chain is 3-demethoxyubiquinol 3-hydroxylase from Cupriavidus metallidurans (strain ATCC 43123 / DSM 2839 / NBRC 102507 / CH34) (Ralstonia metallidurans).